The following is a 275-amino-acid chain: MPIIKCNPTSPGRRHVTKLVNHDLYKGNPFSSLLSNKINNRSGGRNNYGRITVRHIGGGHKKRYRIIDFKRNKDGISAVIKRLEYDPNRSANIALLSYRDGEYRYILAPKDVKIGDFISSGANVPIKPGNALPMSNIPIGSIIHNVEMKPGKGGQLARSAGSYIQIVARDGEYMILRLRSGEIRKIRCECRATVGEVGNAEHMLRMLGKAGANRWRGNRPTVRGTAMNPIDHPHGGGEGKNFGKHPVSPWGIQTKGKKTRSNKRTNKFILSHRNK.

The interval 214 to 275 (RWRGNRPTVR…NKFILSHRNK (62 aa)) is disordered. The span at 255–275 (KGKKTRSNKRTNKFILSHRNK) shows a compositional bias: basic residues.

The protein belongs to the universal ribosomal protein uL2 family. As to quaternary structure, part of the 50S ribosomal subunit. Forms a bridge to the 30S subunit in the 70S ribosome.

In terms of biological role, one of the primary rRNA binding proteins. Required for association of the 30S and 50S subunits to form the 70S ribosome, for tRNA binding and peptide bond formation. It has been suggested to have peptidyltransferase activity; this is somewhat controversial. Makes several contacts with the 16S rRNA in the 70S ribosome. This chain is Large ribosomal subunit protein uL2, found in Blochmanniella pennsylvanica (strain BPEN).